Here is a 398-residue protein sequence, read N- to C-terminus: tRNA(Ile)-lysidine synthase (398 aa).

Position 25 to 30 (25 to 30 (SGGVDS)) interacts with ATP.

The protein belongs to the tRNA(Ile)-lysidine synthase family.

The protein resides in the cytoplasm. The catalysed reaction is cytidine(34) in tRNA(Ile2) + L-lysine + ATP = lysidine(34) in tRNA(Ile2) + AMP + diphosphate + H(+). In terms of biological role, ligates lysine onto the cytidine present at position 34 of the AUA codon-specific tRNA(Ile) that contains the anticodon CAU, in an ATP-dependent manner. Cytidine is converted to lysidine, thus changing the amino acid specificity of the tRNA from methionine to isoleucine. This is tRNA(Ile)-lysidine synthase from Francisella tularensis subsp. tularensis (strain SCHU S4 / Schu 4).